A 228-amino-acid polypeptide reads, in one-letter code: uncharacterized protein (228 aa).

Transmembrane regions (helical) follow at residues 14–34 (HTIS…MLLA), 42–62 (VALF…AITL), 130–150 (FMFS…LVGS), 156–176 (FSFD…VLFM), and 192–212 (IAIA…LIAL).

It belongs to the AzlC family.

It is found in the cell membrane. This is an uncharacterized protein from Helicobacter pylori (strain J99 / ATCC 700824) (Campylobacter pylori J99).